A 201-amino-acid polypeptide reads, in one-letter code: Probable molybdenum cofactor guanylyltransferase (201 aa).

Residues 16-18 (LAG), K28, D75, and D107 contribute to the GTP site. D107 provides a ligand contact to Mg(2+).

It belongs to the MobA family. The cofactor is Mg(2+).

It localises to the cytoplasm. It carries out the reaction Mo-molybdopterin + GTP + H(+) = Mo-molybdopterin guanine dinucleotide + diphosphate. Its function is as follows. Transfers a GMP moiety from GTP to Mo-molybdopterin (Mo-MPT) cofactor (Moco or molybdenum cofactor) to form Mo-molybdopterin guanine dinucleotide (Mo-MGD) cofactor. This Mycobacterium bovis (strain ATCC BAA-935 / AF2122/97) protein is Probable molybdenum cofactor guanylyltransferase.